The sequence spans 191 residues: Cell division protein SepF (191 aa).

Positions 151 to 164 (SSSPEEASPSSVST) are enriched in low complexity. The disordered stretch occupies residues 151–191 (SSSPEEASPSSVSTEKTPQYSLGKNTTPEPAWGNSKLSAYS). Over residues 165–178 (EKTPQYSLGKNTTP) the composition is skewed to polar residues.

This sequence belongs to the SepF family. Homodimer. Interacts with FtsZ.

Its subcellular location is the cytoplasm. Its function is as follows. Cell division protein that is part of the divisome complex and is recruited early to the Z-ring. Probably stimulates Z-ring formation, perhaps through the cross-linking of FtsZ protofilaments. Its function overlaps with FtsA. In Prochlorococcus marinus (strain MIT 9301), this protein is Cell division protein SepF.